The sequence spans 349 residues: MTIGIVSYGAYVPRYRIKIEEIARLWGDDAEALKNGLMVYEKSVPDVDEDAATIAVEAARYAMARSGVDPSRIGAVYTGSESHPYAVKPTSTIVAQAIGATPEMTAADFEFACKAGTAAVQACMGLVGSGMIDLGLAIGADVSQGAPSDALEYTAAAGGVACLIGRKESELAAIIEDTYSFTTDTPDFWRREGMPYPEHGGRFTGEPGYFKHVTNGAKGLLEKLGTKPEDYDYAVFHQPNGKFPSKAAKILGFTKAQITPGLVVPKIGNTYSGSCLMGIAATLDQAKPGDRIFATAFGSGAGSDAFSITVTDRIEEIRNRAPKVSELIKDPVYIDYARYARHKGKIRLA.

Residues D29 and A30 each contribute to the (3S)-3-hydroxy-3-methylglutaryl-CoA site. Catalysis depends on E81, which acts as the Proton donor/acceptor. (3S)-3-hydroxy-3-methylglutaryl-CoA-binding residues include C113 and T154. C113 acts as the Acyl-thioester intermediate in catalysis. R202 contributes to the CoA binding site. (3S)-3-hydroxy-3-methylglutaryl-CoA is bound by residues T204 and H237. H237 serves as the catalytic Proton donor/acceptor. Position 242 (K242) interacts with CoA. (3S)-3-hydroxy-3-methylglutaryl-CoA contacts are provided by K246, N269, and S299.

The protein belongs to the thiolase-like superfamily. Archaeal HMG-CoA synthase family. As to quaternary structure, interacts with acetoacetyl-CoA thiolase that catalyzes the precedent step in the pathway and with a DUF35 protein. The acetoacetyl-CoA thiolase/HMG-CoA synthase complex channels the intermediate via a fused CoA-binding site, which allows for efficient coupling of the endergonic thiolase reaction with the exergonic HMGCS reaction.

The catalysed reaction is acetoacetyl-CoA + acetyl-CoA + H2O = (3S)-3-hydroxy-3-methylglutaryl-CoA + CoA + H(+). Its pathway is metabolic intermediate biosynthesis; (R)-mevalonate biosynthesis; (R)-mevalonate from acetyl-CoA: step 2/3. Its function is as follows. Catalyzes the condensation of acetyl-CoA with acetoacetyl-CoA to form 3-hydroxy-3-methylglutaryl-CoA (HMG-CoA). Functions in the mevalonate (MVA) pathway leading to isopentenyl diphosphate (IPP), a key precursor for the biosynthesis of isoprenoid compounds that are building blocks of archaeal membrane lipids. This chain is Hydroxymethylglutaryl-CoA synthase, found in Methanosarcina acetivorans (strain ATCC 35395 / DSM 2834 / JCM 12185 / C2A).